The chain runs to 116 residues: Outer membrane protein assembly factor BamE (116 aa).

The signal sequence occupies residues methionine 1–glycine 22. Cysteine 23 is lipidated: N-palmitoyl cysteine. A lipid anchor (S-diacylglycerol cysteine) is attached at cysteine 23.

It belongs to the BamE family. In terms of assembly, part of the Bam complex, which is composed of the outer membrane protein BamA, and four lipoproteins BamB, BamC, BamD and BamE.

The protein localises to the cell outer membrane. Functionally, part of the outer membrane protein assembly complex, which is involved in assembly and insertion of beta-barrel proteins into the outer membrane. This Yersinia pestis protein is Outer membrane protein assembly factor BamE.